A 418-amino-acid polypeptide reads, in one-letter code: Histidine--tRNA ligase (418 aa).

It belongs to the class-II aminoacyl-tRNA synthetase family. As to quaternary structure, homodimer.

The protein resides in the cytoplasm. It carries out the reaction tRNA(His) + L-histidine + ATP = L-histidyl-tRNA(His) + AMP + diphosphate + H(+). This is Histidine--tRNA ligase from Thermoanaerobacter pseudethanolicus (strain ATCC 33223 / 39E) (Clostridium thermohydrosulfuricum).